A 504-amino-acid polypeptide reads, in one-letter code: MEQYQAYLELRRSRYQDILYPLFFRESIYGLAYAHESFFIENVDYNNKFSLLIVKRLSTRMYQQTHFILFVNDSKKNTFVGYNYHFFSQIILEGFGIVVEILFSLQLFSSSLRGLEIVKSYKNFQSIHSIFPFFEDQLIYLNHKSDIRIPYPIHLEILVQILRYSIKDVSFFHLIRLFFYYYYNWNSLFPPKKWIFTFFSKRNRRIFLFLYNLYVWEYESIFLFLRNKSSQLQLKHFRVFFERIFFYEKIKHLVEVSTKNCSYTFFFFKDTFIHYVRYQGKSILVLKNTPFLINKWKYYFIYLWQCHFDIWAGLETIYINELSQYSFHFLGYFLSIPLNLSVVRSQMLQNSFLIKIVIKKLDTIVPIIPLMRSLAKTKFCNVMGHPISKPVWANLSDFDIIDRFLRICRNFSHYYNGSAKKKSFYQIKYILRFSCIKTLARKHKSTVRIYLKKLSSEKLLEEFFTEEDLFSLIFPRTSFTLRRFYRGRIWYLDILLRNDFVNYL.

Belongs to the intron maturase 2 family. MatK subfamily.

The protein resides in the plastid. The protein localises to the chloroplast. Usually encoded in the trnK tRNA gene intron. Probably assists in splicing its own and other chloroplast group II introns. This chain is Maturase K, found in Vigna unguiculata (Cowpea).